Here is a 354-residue protein sequence, read N- to C-terminus: Phosphate acyltransferase (354 aa).

This sequence belongs to the PlsX family. In terms of assembly, homodimer. Probably interacts with PlsY.

It localises to the cytoplasm. It catalyses the reaction a fatty acyl-[ACP] + phosphate = an acyl phosphate + holo-[ACP]. Its pathway is lipid metabolism; phospholipid metabolism. Functionally, catalyzes the reversible formation of acyl-phosphate (acyl-PO(4)) from acyl-[acyl-carrier-protein] (acyl-ACP). This enzyme utilizes acyl-ACP as fatty acyl donor, but not acyl-CoA. The sequence is that of Phosphate acyltransferase from Bordetella petrii (strain ATCC BAA-461 / DSM 12804 / CCUG 43448).